The chain runs to 88 residues: Electron transfer flavoprotein regulatory factor 1 (88 aa).

Belongs to the complex I LYR family. In terms of assembly, homotetramer. Interacts with NDUFAB1. Interacts with ETFA. Interacts with ETFB.

The protein localises to the mitochondrion. Its function is as follows. Acts as a regulator of the electron transfer flavoprotein by promoting the removal of flavin from the ETF holoenzyme (composed of ETFA and ETFB). This chain is Electron transfer flavoprotein regulatory factor 1, found in Bos taurus (Bovine).